Here is a 258-residue protein sequence, read N- to C-terminus: Large ribosomal subunit protein bL28m (258 aa).

The N-terminal 21 residues, 1-21, are a transit peptide targeting the mitochondrion; it reads MQKIFRPFQLTRGFTSSVKNF.

Belongs to the bacterial ribosomal protein bL28 family. In terms of assembly, component of the mitochondrial large ribosomal subunit (mt-LSU). Mature yeast 74S mitochondrial ribosomes consist of a small (37S) and a large (54S) subunit. The 37S small subunit contains a 15S ribosomal RNA (15S mt-rRNA) and 34 different proteins. The 54S large subunit contains a 21S rRNA (21S mt-rRNA) and 46 different proteins.

The protein localises to the mitochondrion. In terms of biological role, component of the mitochondrial ribosome (mitoribosome), a dedicated translation machinery responsible for the synthesis of mitochondrial genome-encoded proteins, including at least some of the essential transmembrane subunits of the mitochondrial respiratory chain. The mitoribosomes are attached to the mitochondrial inner membrane and translation products are cotranslationally integrated into the membrane. In Saccharomyces cerevisiae (strain ATCC 204508 / S288c) (Baker's yeast), this protein is Large ribosomal subunit protein bL28m (MRPL24).